The sequence spans 420 residues: UDP-N-acetylglucosamine 1-carboxyvinyltransferase (420 aa).

Position 22-23 (22-23 (KN)) interacts with phosphoenolpyruvate. Arg93 serves as a coordination point for UDP-N-acetyl-alpha-D-glucosamine. Residue Cys117 is the Proton donor of the active site. Cys117 carries the 2-(S-cysteinyl)pyruvic acid O-phosphothioketal modification. Residues Asp306 and Ile328 each coordinate UDP-N-acetyl-alpha-D-glucosamine.

It belongs to the EPSP synthase family. MurA subfamily.

The protein resides in the cytoplasm. The enzyme catalyses phosphoenolpyruvate + UDP-N-acetyl-alpha-D-glucosamine = UDP-N-acetyl-3-O-(1-carboxyvinyl)-alpha-D-glucosamine + phosphate. Its pathway is cell wall biogenesis; peptidoglycan biosynthesis. Its function is as follows. Cell wall formation. Adds enolpyruvyl to UDP-N-acetylglucosamine. In Colwellia psychrerythraea (strain 34H / ATCC BAA-681) (Vibrio psychroerythus), this protein is UDP-N-acetylglucosamine 1-carboxyvinyltransferase.